The sequence spans 186 residues: UPF0303 protein ZMO1353 (186 aa).

It belongs to the UPF0303 family.

The sequence is that of UPF0303 protein ZMO1353 from Zymomonas mobilis subsp. mobilis (strain ATCC 31821 / ZM4 / CP4).